We begin with the raw amino-acid sequence, 342 residues long: S-adenosylmethionine:tRNA ribosyltransferase-isomerase (342 aa).

Belongs to the QueA family. In terms of assembly, monomer.

The protein localises to the cytoplasm. The enzyme catalyses 7-aminomethyl-7-carbaguanosine(34) in tRNA + S-adenosyl-L-methionine = epoxyqueuosine(34) in tRNA + adenine + L-methionine + 2 H(+). It functions in the pathway tRNA modification; tRNA-queuosine biosynthesis. Functionally, transfers and isomerizes the ribose moiety from AdoMet to the 7-aminomethyl group of 7-deazaguanine (preQ1-tRNA) to give epoxyqueuosine (oQ-tRNA). The protein is S-adenosylmethionine:tRNA ribosyltransferase-isomerase of Streptococcus sanguinis (strain SK36).